We begin with the raw amino-acid sequence, 133 residues long: Small ribosomal subunit protein uS9 (133 aa).

A compositionally biased stretch (basic and acidic residues) spans 95–113 (GDSKQELKSRGFLTRDPRK). Residues 95-133 (GDSKQELKSRGFLTRDPRKKERKKYGHKKARKSFQFSKR) are disordered. Residues 114–133 (KERKKYGHKKARKSFQFSKR) are compositionally biased toward basic residues.

Belongs to the universal ribosomal protein uS9 family.

This is Small ribosomal subunit protein uS9 from Chlamydia felis (strain Fe/C-56) (Chlamydophila felis).